Reading from the N-terminus, the 545-residue chain is Indole-3-pyruvate decarboxylase (545 aa).

Thiamine diphosphate is bound at residue glutamate 48. The thiamine pyrophosphate binding stretch occupies residues 382–460; sequence DCLFTAMDMI…VILFNNASWE (79 aa). The Mg(2+) site is built by aspartate 429 and asparagine 456.

This sequence belongs to the TPP enzyme family. A metal cation is required as a cofactor. Thiamine diphosphate serves as cofactor.

The enzyme catalyses indole-3-pyruvate + H(+) = indole-3-acetaldehyde + CO2. Its pathway is plant hormone metabolism; auxin biosynthesis. The polypeptide is Indole-3-pyruvate decarboxylase (ipdC) (Azospirillum brasilense).